The primary structure comprises 219 residues: Transmembrane emp24 domain-containing protein 10 (219 aa).

The first 31 residues, 1-31, serve as a signal peptide directing secretion; the sequence is MSGWSGPLARRGPGPLALLFLFLLGPSSVLA. Residues 1–142 form a required for interaction with STX17 region; it reads MSGWSGPLAR…KNYEEIAKVE (142 aa). The Lumenal segment spans residues 32–185; the sequence is ISFHLPVNSR…RDTNESTNTR (154 aa). In terms of domain architecture, GOLD spans 41 to 193; it reads RKCLREEIHK…TRVLYFSIFS (153 aa). The tract at residues 147 to 178 is required for TMED10 and TMED2 cis-Golgi network localization; that stretch reads LEVELRRLEDLSESIVNDFAYMKKREEEMRDT. Dimethylated arginine is present on residues Arg171 and Arg176. An N-linked (GlcNAc...) asparagine glycan is attached at Asn179. The chain crosses the membrane as a helical span at residues 186–206; sequence VLYFSIFSMFCLIGLATWQVF. An interaction with COPG1 region spans residues 204 to 219; that stretch reads QVFYLRRFFKAKKLIE. Topologically, residues 207–219 are cytoplasmic; the sequence is YLRRFFKAKKLIE. The interaction with ARF1 and IL1B stretch occupies residues 207-219; sequence YLRRFFKAKKLIE. Positions 211 to 212 match the COPII vesicle coat-binding motif; sequence FF. The short motif at 211-219 is the COPI vesicle coat-binding element; that stretch reads FFKAKKLIE.

It belongs to the EMP24/GP25L family. In terms of assembly, predominantly dimeric and to a lesser extent monomeric in the ER. Monomer and dimer in ERGIC and cis-Golgi network. Forms homooligomer (via GOLD domain); the assembly is promoted by direct binding with leaderless cargos and may form a protein channel that facilitates cargo entry into the ERGIC. Forms heterooligomeric complexes with other members of the p24 family such as TMED2, TMED7 and TMED9. Interacts (via GOLD domain) with TMED2 (via GOLD domain); the complex is required for export of TMED10 from the ER to the cis-Golgi network; the complex is proposed to be involved in cis-Golgi network dynamics and / or biogenesis. Associates with the COPI vesicle coat subunits (coatomer). Tetramerization of the cytoplasmic domain at the Golgi membrane in vitro; the complex is proposed to interact with COPI coatomer and induce budding of the vesicles. Interacts with COPG1; the interaction involves TMED10 homodimer. Interacts with ARF1 (GDP-bound); the interaction probably involves a TMED10 oligomer. Interacts with SEC23A, SEC24B, SEC24C and SEC24D components of the coat protein complex II/COPII, indicative of an association of TMED10 with the COPII vesicle coat. Interacts with CD59. Interacts with MPPE1/PGAP5; the complex might recruit and sort GPI-anchored proteins to the ER-exit site, or the interaction might lead to recycling of PGAP5 between the ER and the Golgi. Interacts with F2LR1/PAR2. Interacts with KDELR2/ERD2; the interaction is disrupted by KDELR2 ligand. Found in a complex composed at least of SURF4, TMED2 and TMED10. Associates with the presenilin-dependent gamma-secretase complex. Interacts with STX17; the interaction is direct. Interacts with IL-1; the interaction is direct. Interacts with RAB21 (active GTP-bound form); the interaction is indirect and regulates TMED10 abundance and localization at the Golgi.

The protein resides in the endoplasmic reticulum membrane. Its subcellular location is the endoplasmic reticulum-Golgi intermediate compartment membrane. It localises to the golgi apparatus membrane. The protein localises to the golgi apparatus. It is found in the cis-Golgi network membrane. The protein resides in the trans-Golgi network membrane. Its subcellular location is the cytoplasmic vesicle. It localises to the secretory vesicle membrane. The protein localises to the cell membrane. It is found in the melanosome. Cargo receptor involved in protein vesicular trafficking and quality control in the endoplasmic reticulum (ER) and Golgi. The p24 protein family is a group of transmembrane proteins that bind coat protein complex I/COPI and coat protein complex II/COPII involved in vesicular trafficking between the membranes. Acts at the lumenal side for incorporation of secretory cargo molecules into transport vesicles and involved in vesicle coat formation at the cytoplasmic side. Mainly functions in the early secretory pathway and cycles between the ER, ER-Golgi intermediate compartment (ERGIC) and Golgi, mediating cargo transport through COPI and COPII-coated vesicles. In COPII vesicle-mediated anterograde transport, involved in the transport of GPI-anchored proteins by acting together with TMED2 as their cargo receptor; the function specifically implies SEC24C and SEC24D of the COPII vesicle coat and lipid raft-like microdomains of the ER. Recognizes GPI anchors structural remodeled in the ER by the GPI inositol-deacylase/PGAP1 and the metallophosphoesterase MPPE1/PGAP5. In COPI vesicle-mediated retrograde transport, involved in the biogenesis of COPI vesicles and vesicle coat recruitment. Involved in trafficking of amyloid beta A4 protein and soluble APP-beta release (independent from the modulation of gamma-secretase activity). Involved in the KDELR2-mediated retrograde transport of the toxin A subunit (CTX-A-K63)together with COPI and the COOH terminus of KDELR2. On Golgi membranes, acts as a primary receptor for ARF1-GDP, a GTP-binding protein involved in COPI-vesicle formation. Increases coatomer-dependent GTPase-activating activity of ARFGAP2 which mediates the hydrolysis of ARF1-bound GTP and therefore modulates protein trafficking from the Golgi apparatus. Involved in the exocytic trafficking of G protein-coupled receptors F2LR1/PAR2 (trypsin and tryspin-like enzyme receptor), OPRM1 (opioid receptor) and P2RY4 (UTD and UDP receptor) from the Golgi to the plasma membrane, thus contributing to receptor resensitization. In addition to its cargo receptor activity, may also act as a protein channel after oligomerization, facilitating the post-translational entry of leaderless cytoplasmic cargo into the ERGIC. Involved in the translocation into ERGIC, the vesicle entry and the secretion of leaderless cargos (lacking the secretion signal sequence), including the mature form of interleukin 1/IL-1 family members, the alpha-crystallin B chain HSPB5, the carbohydrate-binding proteins galectin-1/LGALS1 and galectin-3/LGALS3, the microtubule-associated protein Tau/MAPT, and the annexin A1/ANXA1; the translocation process is dependent on cargo protein unfolding and enhanced by chaperones HSP90AB1 and HSP90B1/GRP9. Could also associates with the presenilin-dependent gamma-secretase complex in order to regulate gamma-cleavages of the amyloid beta A4 protein to yield amyloid-beta 40/Abeta40. This is Transmembrane emp24 domain-containing protein 10 (TMED10) from Oryctolagus cuniculus (Rabbit).